Reading from the N-terminus, the 1127-residue chain is MNNQRKKARSTPFNMLRRERNRVSTVQQLTKRFSLGMLQGRGPLKLFMALVALPRFLTIPPTAGILKRWGTIKKSKAINDVRGCRKEIGRMLNILNRRRRTAGVIIMLIPTVMAFHLTTRNGEPHMIVSRQEKGKSLLFKTEDGVNMCTLMAIDFGELCEDTITYKCPLLRQNEPEDIDCWCNSTSTWVTYGTRTTTGEHGREKRSVALVPHVGMGLETGTETWMSSDGAWKRACRMETWILRHPGFTIMAAILAYTIGTTHFQRGLILILQTAVAPSMTMRCIGISNRDFVEGVSGGSWVDIVLEHGSCVTTMAKNKPTLDFELIKTEATQPATLRKYCIEAKLTNTTTESRCPTQGEPSLNEEQDKRFVCKHSMVDRGWGNGCGLFGKGGIVTCAMFTCKKNMEGNIVQPENLEYTIVITPHSGEEHAVGNDTGKHGKEIKITPQSSITEAELTGYGTVTMECSPRTGLDFNEIVLLQMEDKAWLVHRQWFLDLPLPWLPGADTQGSNRIQKETLVTFKNPHAKKQDVVVLGSQEGAMHTALTGATEIQMSSGNLLFTGHLKCRLRMDKLQLKGMSYSMCTGKFQIVKEIAETQHGTIVIRVQYEGDGSPCKIPLEIMDLEKRHVLGRLITVNPIVTEKDSPVNIEAEPPFGDSYIIIGVEPGQLKLHWFKKGSSIGQMFETTMRGAKRMAILGDTAWDFGSLGGVFTSIGKALHQVFGAIYGAAFSGVSWTMKILIGVIITWIGMNSRSTSLSVSLVLVGVITLYLGAMVQADSGCVVSWKNKELKCGSGIFITDNVHTWTEQYNFQPESPSKLASAMRKAHEEGICGIRSVTRLENLMWKQITPELKHILSEIEVKLTIMTGDIKGIMQAGTRSLRPQPTELKFSWETWRKAKMVPTEPHNQTFLIDGPETAECPNTNRAWNSLEVEDYGFGVFTTNIWLKLREKEDLCCDSKVMSAASKDNRAVHDDMGYWIESALNDTWKMEKASFIEVKSCHWPKSHTLWINGGLESEMIIPKSFAGPVSQHNYRPGYYTQTAGPRHLGKLEMDFDFCEGTTVVVTEDCGNRGPSLRTTTASGKLITEWCCRSSTIPPLRIKGEDGCWYGMEIRPLKEKEENLVTSLVTA.

Residues 1–15 are interaction with host EXOC1; sequence MNNQRKKARSTPFNM. Over 1 to 101 the chain is Cytoplasmic; that stretch reads MNNQRKKARS…LNILNRRRRT (101 aa). The segment at 37 to 72 is hydrophobic; homodimerization of capsid protein C; that stretch reads MLQGRGPLKLFMALVALPRFLTIPPTAGILKRWGTI. A propeptide spans 101 to 114 (ER anchor for the capsid protein C, removed in mature form by serine protease NS3); the sequence is TAGVIIMLIPTVMA. The helical transmembrane segment at 102–122 threads the bilayer; the sequence is AGVIIMLIPTVMAFHLTTRNG. The Extracellular portion of the chain corresponds to 123–238; that stretch reads EPHMIVSRQE…GAWKRACRME (116 aa). N-linked (GlcNAc...) asparagine; by host glycosylation is present at N183. A helical transmembrane segment spans residues 239–259; sequence TWILRHPGFTIMAAILAYTIG. At 260–265 the chain is on the cytoplasmic side; the sequence is TTHFQR. The chain crosses the membrane as a helical span at residues 266–280; sequence GLILILQTAVAPSMT. Over 281-725 the chain is Extracellular; sequence MRCIGISNRD…LHQVFGAIYG (445 aa). 4 cysteine pairs are disulfide-bonded: C283–C310, C340–C401, C354–C385, and C372–C396. N347 is a glycosylation site (N-linked (GlcNAc...) asparagine; by host). The fusion peptide stretch occupies residues 378–391; it reads DRGWGNGCGLFGKG. Residue N433 is glycosylated (N-linked (GlcNAc...) asparagine; by host). 2 disulfide bridges follow: C465-C565 and C582-C613. Residues 726 to 746 traverse the membrane as a helical segment; that stretch reads AAFSGVSWTMKILIGVIITWI. At 747-754 the chain is on the cytoplasmic side; the sequence is GMNSRSTS. Residues 755 to 773 form a helical membrane-spanning segment; sequence LSVSLVLVGVITLYLGAMV. Residues 774-1127 are Extracellular-facing; the sequence is QADSGCVVSW…ENLVTSLVTA (354 aa). 5 disulfide bridges follow: C779–C790, C830–C918, C954–C998, C1055–C1104, and C1066–C1088. N-linked (GlcNAc...) asparagine; by host glycans are attached at residues N905 and N982.

As to quaternary structure, homodimer. Interacts (via N-terminus) with host EXOC1 (via C-terminus); this interaction results in EXOC1 degradation through the proteasome degradation pathway. Forms heterodimers with envelope protein E in the endoplasmic reticulum and Golgi. In terms of assembly, homodimer; in the endoplasmic reticulum and Golgi. Interacts with protein prM. Interacts with non-structural protein 1. As to quaternary structure, homodimer; Homohexamer when secreted. Interacts with envelope protein E. Specific enzymatic cleavages in vivo yield mature proteins. Cleavages in the lumen of endoplasmic reticulum are performed by host signal peptidase, wereas cleavages in the cytoplasmic side are performed by the Serine protease NS3. Signal cleavage at the 2K-4B site requires a prior NS3 protease-mediated cleavage at the 4A-2K site. In terms of processing, cleaved in post-Golgi vesicles by a host furin, releasing the mature small envelope protein M, and peptide pr. This cleavage is incomplete as up to 30% of viral particles still carry uncleaved prM. Post-translationally, N-glycosylated. N-glycosylated. The excreted form is glycosylated and this is required for efficient secretion of the protein from infected cells.

It localises to the virion. Its subcellular location is the host nucleus. The protein localises to the host cytoplasm. It is found in the host perinuclear region. The protein resides in the secreted. It localises to the virion membrane. Its subcellular location is the host endoplasmic reticulum membrane. In terms of biological role, plays a role in virus budding by binding to the cell membrane and gathering the viral RNA into a nucleocapsid that forms the core of a mature virus particle. During virus entry, may induce genome penetration into the host cytoplasm after hemifusion induced by the surface proteins. Can migrate to the cell nucleus where it modulates host functions. Overcomes the anti-viral effects of host EXOC1 by sequestering and degrading the latter through the proteasome degradation pathway. Its function is as follows. Inhibits RNA silencing by interfering with host Dicer. Prevents premature fusion activity of envelope proteins in trans-Golgi by binding to envelope protein E at pH6.0. After virion release in extracellular space, gets dissociated from E dimers. Functionally, acts as a chaperone for envelope protein E during intracellular virion assembly by masking and inactivating envelope protein E fusion peptide. prM is the only viral peptide matured by host furin in the trans-Golgi network probably to avoid catastrophic activation of the viral fusion activity in acidic GolGi compartment prior to virion release. prM-E cleavage is inefficient, and many virions are only partially matured. These uncleaved prM would play a role in immune evasion. In terms of biological role, may play a role in virus budding. Exerts cytotoxic effects by activating a mitochondrial apoptotic pathway through M ectodomain. May display a viroporin activity. Its function is as follows. Binds to host cell surface receptor and mediates fusion between viral and cellular membranes. Envelope protein is synthesized in the endoplasmic reticulum in the form of heterodimer with protein prM. They play a role in virion budding in the ER, and the newly formed immature particle is covered with 60 spikes composed of heterodimer between precursor prM and envelope protein E. The virion is transported to the Golgi apparatus where the low pH causes dissociation of PrM-E heterodimers and formation of E homodimers. prM-E cleavage is inefficient, and many virions are only partially matured. These uncleaved prM would play a role in immune evasion. Involved in immune evasion, pathogenesis and viral replication. Once cleaved off the polyprotein, is targeted to three destinations: the viral replication cycle, the plasma membrane and the extracellular compartment. Essential for viral replication. Required for formation of the replication complex and recruitment of other non-structural proteins to the ER-derived membrane structures. Excreted as a hexameric lipoparticle that plays a role against host immune response. Antagonizing the complement function. Binds to the host macrophages and dendritic cells. Inhibits signal transduction originating from Toll-like receptor 3 (TLR3). Functionally, disrupts the host endothelial glycocalyx layer of host pulmonary microvascular endothelial cells, inducing degradation of sialic acid and shedding of heparan sulfate proteoglycans. NS1 induces expression of sialidases, heparanase, and activates cathepsin L, which activates heparanase via enzymatic cleavage. These effects are probably linked to the endothelial hyperpermeability observed in severe dengue disease. The polypeptide is Genome polyprotein (Dengue virus type 2 (strain China/D2-04) (DENV-2)).